The following is a 430-amino-acid chain: Gustatory receptor-like 43a (430 aa).

Residues 1–31 (MSTGSHSPEAMWSATNFRRHQRKPNQVLHRW) are Cytoplasmic-facing. Residues 32–52 (FFKGSAWIIYAIACGLHFFKL) form a helical membrane-spanning segment. Over 53 to 79 (HYNERTNQVEESQYHRIWSKIVVVLKV) the chain is Extracellular. A helical membrane pass occupies residues 80–100 (ILLASPYLQYFVLGLGIYIHI). Residues 101–110 (TLVQDSKAQN) are Cytoplasmic-facing. Residues 111 to 131 (FLMSLIVLGIVIGVLRRLLIF) form a helical membrane-spanning segment. At 132–168 (LHLKRDRRFLKHTVNEILHITSALEQKFGMEYKCDST) the chain is on the extracellular side. Residues 169-189 (LLVVYLAKLWILTVMLDSLWY) traverse the membrane as a helical segment. Residues 190-277 (KPYFLSSIFL…RDNVSWLSTS (88 aa)) are Cytoplasmic-facing. Residues 278 to 298 (VYLMIFTCIFNAELLIECSLF) form a helical membrane-spanning segment. At 299–306 (AGDELENK) the chain is on the extracellular side. Residues 307-327 (IYIITDGCLGPVCVPILYVLI) form a helical membrane-spanning segment. Residues 328-396 (LGMCTDRFRD…IILDITCDRE (69 aa)) lie on the Cytoplasmic side of the membrane. A helical membrane pass occupies residues 397 to 417 (FVMDYIVTVILTALSLVQYTI). Residues 418 to 430 (STGGNISECVTHK) are Extracellular-facing. Residue Asn422 is glycosylated (N-linked (GlcNAc...) asparagine).

The protein resides in the cell membrane. This is Gustatory receptor-like 43a from Drosophila melanogaster (Fruit fly).